The following is a 504-amino-acid chain: Maturase K (504 aa).

This sequence belongs to the intron maturase 2 family. MatK subfamily.

Its subcellular location is the plastid. It localises to the chloroplast. In terms of biological role, usually encoded in the trnK tRNA gene intron. Probably assists in splicing its own and other chloroplast group II introns. The chain is Maturase K from Quercus cerris (Turkey oak).